The sequence spans 312 residues: MFFHKKRDVHGLLLLDKPQGISSNNALQKVKMLFSAKKAGYIGTLDPLATGMLPICFGECSKFSHYLMESNKKYHVIAKLGEKTSTSDSDGIIIKKRPILINSFKIKSALKELTGLIEQIPPMYSAIKHNGVPLYKYARQGLNIKRSIRKVLIHDISSIHQEKNLIEFKIFCSKGTYVRTLVEDLGEKLGCGAHVIFLRRLEMASYLHSQLVTISYLHKLLRKEKNNNFNFFEKIDNLLMPIDSPVSFLPKVYLFPQQSYNFQLGQTVIFFSDIKNSLVRVIALENNKFIGLGRINTEELLIPYRLVSRSIN.

Asp-46 acts as the Nucleophile in catalysis. Tyr-74, Tyr-177, and Leu-198 together coordinate substrate.

It belongs to the pseudouridine synthase TruB family. Type 1 subfamily.

It carries out the reaction uridine(55) in tRNA = pseudouridine(55) in tRNA. Its function is as follows. Responsible for synthesis of pseudouridine from uracil-55 in the psi GC loop of transfer RNAs. This Buchnera aphidicola subsp. Acyrthosiphon pisum (strain APS) (Acyrthosiphon pisum symbiotic bacterium) protein is tRNA pseudouridine synthase B.